Reading from the N-terminus, the 987-residue chain is 110 kDa U5 small nuclear ribonucleoprotein component CLO (987 aa).

The tract at residues 1–54 is disordered; sequence MESSLYDEFGNYVGPEIESDRDSDDEVEDEDLQDKHLEENGSDGEQGPGGSNGW. Positions 17–32 are enriched in acidic residues; it reads IESDRDSDDEVEDEDL. The tr-type G domain occupies 136–422; that stretch reads ALVRNVALVG…LGVTLSNSAY (287 aa). The interval 145–152 is G1; it reads GHLQHGKT. 145–152 contributes to the GTP binding site; that stretch reads GHLQHGKT. A G2 region spans residues 189–193; the sequence is NISIK. The tract at residues 215-218 is G3; the sequence is DTPG. Residues 215 to 219 and 269 to 272 each bind GTP; these read DTPGH and NKVD. Residues 269–272 are G4; that stretch reads NKVD. The tract at residues 395–397 is G5; the sequence is YSQ.

This sequence belongs to the TRAFAC class translation factor GTPase superfamily. Classic translation factor GTPase family. In terms of assembly, interacts with BRR2A and PRP8A. Expressed in flower buds, open flowers and siliques. Expressed at low levels in rosettes leaves, cauline leaves and stems.

It localises to the nucleus speckle. Splicing factor involved in pre-mRNA splicing and component of the spliceosome. Essential for reproduction. In female gametophyte, is necessary for the egg cell and central cell fate determination and hence reproductive success. Involved in a mechanism that prevents accessory cells from adopting gametic cell fate. Is necessary to restrict LIS expression to interfere with egg-cell specification. Probable component of U5 small nuclear ribonucleoprotein (snRNP) that is required for pre-mRNA splicing. Plays an essential role in female gametogenesis and embryo development. Required for the control of polarized cell growth and cell proliferation during floral organ morphogenesis. The protein is 110 kDa U5 small nuclear ribonucleoprotein component CLO of Arabidopsis thaliana (Mouse-ear cress).